Here is a 301-residue protein sequence, read N- to C-terminus: Large ribosomal subunit protein uL18z (301 aa).

This sequence belongs to the universal ribosomal protein uL18 family. In terms of assembly, component of the large ribosomal subunit (LSU). Expressed in seedlings, roots, stems, leaves, inflorescences and siliques.

It localises to the cytoplasm. The protein resides in the nucleus. It is found in the nucleolus. The protein localises to the nucleoplasm. Functionally, component of the ribosome, a large ribonucleoprotein complex responsible for the synthesis of proteins in the cell. The small ribosomal subunit (SSU) binds messenger RNAs (mRNAs) and translates the encoded message by selecting cognate aminoacyl-transfer RNA (tRNA) molecules. The large subunit (LSU) contains the ribosomal catalytic site termed the peptidyl transferase center (PTC), which catalyzes the formation of peptide bonds, thereby polymerizing the amino acids delivered by tRNAs into a polypeptide chain. The nascent polypeptides leave the ribosome through a tunnel in the LSU and interact with protein factors that function in enzymatic processing, targeting, and the membrane insertion of nascent chains at the exit of the ribosomal tunnel. Seems involved in the regulation of cell proliferation. Essential in leaf polarity establishment, probably having a role for translation in leaf dorsoventral patterning to specify leaf adaxial identity. The protein is Large ribosomal subunit protein uL18z of Arabidopsis thaliana (Mouse-ear cress).